The following is a 466-amino-acid chain: MTASQDFVVKDISLADWGRKELDIAETEMPGLMAAREEFGKSQPLKGARISGSLHMTIQTAVLIETLKVLGAEVRWASCNIFSTQDHAAAAIAATGTPVFAVKGETLEEYWTYTDQIFQWPDGEPSNMILDDGGDATMYILIGARAEAGEDVLSNPQSEEEEVLFAQIKKRMAATPGFFTKQRAAIKGVTEETTTGVNRLYQLQKKGLLPFPAINVNDSVTKSKFDNKYGCKESLVDGIRRGTDVMMAGKVAVVCGYGDVGKGSAQSLAGAGARVKVTEVDPICALQAAMDGFEVVTLDDAASTADIVVTTTGNKDVITIDHMRKMKDMCIVGNIGHFDNEIQVAALRNLKWTNVKPQVDLIEFPDGKRLILLSEGRLLNLGNATGHPSFVMSASFTNQVLGQIELFTRTDAYKNEVYVLPKHLDEKVARLHLDKLGAKLTVLSEEQAAYIGVTPQGPFKSEHYRY.

3 residues coordinate substrate: threonine 57, aspartate 132, and glutamate 192. 193-195 (TTT) serves as a coordination point for NAD(+). Residues lysine 222 and aspartate 226 each coordinate substrate. NAD(+)-binding positions include asparagine 227, 256 to 261 (GYGDVG), glutamate 279, asparagine 314, 335 to 337 (IGH), and asparagine 380.

Belongs to the adenosylhomocysteinase family. NAD(+) serves as cofactor.

It is found in the cytoplasm. The enzyme catalyses S-adenosyl-L-homocysteine + H2O = L-homocysteine + adenosine. It participates in amino-acid biosynthesis; L-homocysteine biosynthesis; L-homocysteine from S-adenosyl-L-homocysteine: step 1/1. May play a key role in the regulation of the intracellular concentration of adenosylhomocysteine. The polypeptide is Adenosylhomocysteinase (Brucella abortus (strain S19)).